The sequence spans 704 residues: Preterpestacin I synthase tpcA (704 aa).

The terpene cyclase stretch occupies residues 1 to 329 (MEQLSYQSKL…CSACPRQNAW (329 aa)). D96 lines the Mg(2+) pocket. Residues D96, N231, 235 to 239 (SWERE), and 325 to 326 (RQ) each bind substrate. Positions 96–100 (DDGGE) match the DDXXD 1 motif. The short motif at 231-239 (NDYFSWERE) is the NSE/DTE element. The segment at 330 to 688 (KDMSSQSLNG…MLRLCLAKLS (359 aa)) is prenyltransferase. A disordered region spans residues 361–380 (KDSSFFGSQPSDDEPSLSEV). 3 residues coordinate isopentenyl diphosphate: K406, R409, and H438. Residues D445 and D449 each coordinate Mg(2+). The DDXXD 2 motif lies at 445 to 449 (DDLED). Dimethylallyl diphosphate is bound at residue R454. Residue R455 participates in isopentenyl diphosphate binding. Positions 532, 533, 568, 575, 583, and 593 each coordinate dimethylallyl diphosphate.

It in the N-terminal section; belongs to the terpene synthase family. This sequence in the C-terminal section; belongs to the FPP/GGPP synthase family. In terms of assembly, hexamer. The cofactor is Mg(2+).

The enzyme catalyses isopentenyl diphosphate + (2E,6E)-farnesyl diphosphate = (2E,6E,10E)-geranylgeranyl diphosphate + diphosphate. It catalyses the reaction isopentenyl diphosphate + (2E,6E,10E)-geranylgeranyl diphosphate = (2E,6E,10E,14E)-geranylfarnesyl diphosphate + diphosphate. The protein operates within secondary metabolite biosynthesis; terpenoid biosynthesis. Bifunctional terpene synthase; part of the gene cluster that mediates the biosynthesis of terpestacin. The bifunctional terpene synthase tpcA converts isopentenyl diphosphate (IPP) and dimethylallyl diphosphate (DMAPP) into the sesterterpene preterpestacin I. The C-terminal prenyltransferase (PT) domain of tpcA catalyzes formation of GFPP, whereas the N-terminal terpene cyclase (TC) domain catalyzes the cyclization of GFPP into preterpestacin I. The cytochrome P450 monooxygenase tpcB then hydroxylates preterpestacin I to yield 24-hydroxypreterpstacin I (renamed as preterpestacin II) whereas the cytochrome P450 monooxygenase tpcC further hydroxylates preterpestacin II to yield 16,17-dihydroxypreterpestacin II (renamed as preterpestacin III). Finally, the FAD-dependent monooxygenase tpcD converts preterpestacin III into terpestacin. This chain is Preterpestacin I synthase tpcA, found in Cochliobolus heterostrophus (strain C5 / ATCC 48332 / race O) (Southern corn leaf blight fungus).